Reading from the N-terminus, the 822-residue chain is Probable phosphoketolase (822 aa).

This sequence belongs to the XFP family. Thiamine diphosphate is required as a cofactor.

The protein is Probable phosphoketolase of Lactococcus lactis subsp. lactis (strain IL1403) (Streptococcus lactis).